A 703-amino-acid chain; its full sequence is Calcium-responsive transcription factor (703 aa).

Disordered stretches follow at residues 1-61, 130-150, and 517-539; these read MEQS…QNIP, GPLVDENSPQDVSEEKPSDRN, and GNSQGESVSSKLETNQTRNSLSP. Positions 9–22 are enriched in basic and acidic residues; the sequence is KVNHNDSEESKTDS. A compositionally biased stretch (polar residues) spans 23 to 34; it reads QHLTYMDSSEPS.

It localises to the nucleus. Acts as a transcriptional activator that mediates the calcium- and neuron-selective induction of BDNF exon III transcription. Binds to the consensus calcium-response element CaRE1 5'-CTATTTCGAG-3' sequence. The chain is Calcium-responsive transcription factor (CARF) from Bos taurus (Bovine).